The chain runs to 941 residues: MNKKKKPFLGMPAPLGYVPGLGRGATGFTTRSDIGPARDANDPVDDRHAPPGKRTVGDQMKKNQAADDDDEDLNDTNYDEFNGYAGSLFSSGPYEKDDEEADAIYAALDKRMDERRKERREQREKEEIEKYRMERPKIQQQFSDLKRKLAEVTEEEWLSIPEVGDARNKRQRNPRYEKLTPVPDSFFAKHLQTGENHTSVDPRQTQFGGLNTPYPGGLNTPYPGGMTPGLMTPGTGELDMRKIGQARNTLMDMRLSQVSDSVSGQTVVDPKGYLTDLNSMIPTHGGDINDIKKARLLLKSVRETNPHHPPAWIASARLEEVTGKLQVARNLIMKGTEMCPKSEDVWLEAARLQPGDTAKAVVAQAVRHLPQSVRIYIRAAELETDIRAKKRVLRKALEHVPNSVRLWKAAVELEEPEDARIMLSRAVECCPTSVELWLALARLETYENARKVLNKARENIPTDRHIWITAAKLEEANGNTQMVEKIIDRAITSLRANGVEINREQWIQDAEECDRAGSVATCQAVMRAVIGIGIEEEDRKHTWMEDADSCVAHNALECARAIYAYALQVFPSKKSVWLRAAYFEKNHGTRESLEALLQRAVAHCPKAEVLWLMGAKSKWLAGDVPAARSILALAFQANPNSEEIWLAAVKLESENDEYERARRLLAKARSSAPTARVFMKSVKLEWVQDNIRAAQDLCEEALRHYEDFPKLWMMKGQIEEQKEMMEKAREAYNQGLKKCPHSTPLWLLLSRLEEKIGQLTRARAILEKSRLKNPKNPGLWLESVRLEYRAGLKNIANTLMAKALQECPNSGILWSEAIFLEARPQRRTKSVDALKKCEHDPHVLLAVAKLFWSQRKITKAREWFHRTVKIDSDLGDAWAFFYKFELQHGTEEQQEEVRKRCESAEPRHGELWCAVSKDIANWQKKIGDILRLVAGRIKNTF.

Residues 1 to 79 are disordered; the sequence is MNKKKKPFLG…DEDLNDTNYD (79 aa). Over residues 39–65 the composition is skewed to basic and acidic residues; sequence DANDPVDDRHAPPGKRTVGDQMKKNQA. The span at 66-78 shows a compositional bias: acidic residues; sequence ADDDDEDLNDTNY. Ser143 carries the phosphoserine modification. Phosphothreonine is present on residues Thr180, Thr266, and Thr275. Residue Ser279 is modified to Phosphoserine. HAT repeat units follow at residues 384–416, 418–444, 445–476, 554–586, 588–620, 622–654, 689–721, 723–755, and 855–887; these read TDIR…LEEP, DARI…ARLE, TYEN…LEEA, NALE…FEKN, GTRE…SKWL, GDVP…LESE, DNIR…IEEQ, EMME…LEEK, and RKIT…FELQ.

Identified in the spliceosome B complex. Identified in the spliceosome C complex. Associates with the U5 snRNP particle. Component of the U4/U6-U5 tri-snRNP complex composed of the U4, U6 and U5 snRNAs and at least PRPF3, PRPF4, PRPF6, PRPF8, PRPF31, SNRNP200, TXNL4A, SNRNP40, DDX23, CD2BP2, PPIH, SNU13, EFTUD2, SART1 and USP39, LSm proteins LSm2-8 and Sm proteins. Interacts with ARAF. Interacts with AR and NR3C1, but not ESR1, independently of the presence of hormones. Interacts with USH1G. Phosphorylated by PRP4K during spliceosome assembly. In terms of tissue distribution, widely expressed.

It localises to the nucleus. Its subcellular location is the nucleoplasm. The protein localises to the nucleus speckle. Functionally, involved in pre-mRNA splicing as component of the U4/U6-U5 tri-snRNP complex, one of the building blocks of the spliceosome. Enhances dihydrotestosterone-induced transactivation activity of AR, as well as dexamethasone-induced transactivation activity of NR3C1, but does not affect estrogen-induced transactivation. The polypeptide is Pre-mRNA-processing factor 6 (Homo sapiens (Human)).